Here is a 321-residue protein sequence, read N- to C-terminus: D-alanine--D-alanine ligase (321 aa).

Residues 121-315 (RIWFLTNNIN…FTNLIEEIIK (195 aa)) enclose the ATP-grasp domain. 147–199 (PMKRPYVIKPLTQGSSIGVEVIFAEDDFNFADYDFPYGDQVIIEQYIKGRELQ) serves as a coordination point for ATP. Residues E268, E282, and N284 each contribute to the Mg(2+) site.

The protein belongs to the D-alanine--D-alanine ligase family. Mg(2+) serves as cofactor. Requires Mn(2+) as cofactor.

The protein localises to the cytoplasm. It catalyses the reaction 2 D-alanine + ATP = D-alanyl-D-alanine + ADP + phosphate + H(+). It functions in the pathway cell wall biogenesis; peptidoglycan biosynthesis. In terms of biological role, cell wall formation. This Rickettsia africae (strain ESF-5) protein is D-alanine--D-alanine ligase.